The sequence spans 220 residues: Cysteine-rich venom protein VAR5 (220 aa).

The N-terminal stretch at 1-22 (MILLKLYLTLAAILCQSRGTTS) is a signal peptide. The region spanning 41-169 (NKHNDLRRTV…PLKYFLVCQY (129 aa)) is the SCP domain. Intrachain disulfides connect cysteine 77-cysteine 156, cysteine 95-cysteine 170, cysteine 151-cysteine 167, cysteine 189-cysteine 196, and cysteine 192-cysteine 201. The region spanning 205 to 220 (CEHSNQYINCPDLTKQ) is the ShKT domain.

This sequence belongs to the CRISP family. In terms of processing, contains 8 disulfide bonds. As to expression, expressed by the venom gland.

It is found in the secreted. Its function is as follows. Blocks ryanodine receptors, and potassium channels. The chain is Cysteine-rich venom protein VAR5 from Varanus acanthurus (Ridge-tailed monitor).